Here is a 77-residue protein sequence, read N- to C-terminus: Large ribosomal subunit protein eL14 (77 aa).

The protein belongs to the eukaryotic ribosomal protein eL14 family.

This Methanococcus vannielii (strain ATCC 35089 / DSM 1224 / JCM 13029 / OCM 148 / SB) protein is Large ribosomal subunit protein eL14.